The primary structure comprises 492 residues: Dipeptide permease D (492 aa).

Helical transmembrane passes span 14-34 (VVAL…LLIL), 49-69 (ALFS…GYLA), 91-111 (LVLG…AIIV), 138-158 (GGFS…PIAC), 167-187 (WAMG…IFLC), 212-232 (NWGW…VLFW), 236-256 (SVYA…RIYL), 269-289 (LIVV…QGGS), 312-332 (MFQS…AWLV), 344-364 (IWGK…ILTL), 379-399 (LMVL…PVAM), 413-433 (VLTG…AGVI), and 458-478 (VFSQ…VIWL).

This sequence belongs to the major facilitator superfamily. Proton-dependent oligopeptide transporter (POT/PTR) (TC 2.A.17) family. DtpD subfamily.

Its subcellular location is the cell inner membrane. Probable proton-dependent permease that transports dipeptides. The sequence is that of Dipeptide permease D from Klebsiella pneumoniae (strain 342).